The sequence spans 258 residues: Chymotrypsin-like elastase family member 1 (258 aa).

The N-terminal stretch at 1 to 8 is a signal peptide; sequence MLVLYGHS. A propeptide spans 9–18 (activation peptide); it reads TQDVPETNAR. The region spanning 19-256 is the Peptidase S1 domain; sequence VVGGTEARRN…YITWINNVIA (238 aa). A disulfide bridge links Cys48 with Cys64. Residue His63 is the Charge relay system of the active site. Ca(2+)-binding residues include Glu77, Asn79, Gln82, and Glu87. N-linked (GlcNAc...) asparagine glycosylation is present at Asn79. Catalysis depends on Asp111, which acts as the Charge relay system. 3 disulfides stabilise this stretch: Cys145/Cys212, Cys176/Cys192, and Cys202/Cys232. The active-site Charge relay system is the Ser206. An N-linked (GlcNAc...) asparagine glycan is attached at Asn233.

This sequence belongs to the peptidase S1 family. Elastase subfamily. Ca(2+) serves as cofactor.

The protein localises to the secreted. It carries out the reaction Hydrolysis of proteins, including elastin. Preferential cleavage: Ala-|-Xaa.. In terms of biological role, serine proteases that hydrolyze many proteins in addition to elastin. This chain is Chymotrypsin-like elastase family member 1 (CELA1), found in Canis lupus familiaris (Dog).